The chain runs to 366 residues: Beta sliding clamp (366 aa).

This sequence belongs to the beta sliding clamp family. As to quaternary structure, forms a ring-shaped head-to-tail homodimer around DNA which binds and tethers DNA polymerases and other proteins to the DNA. The DNA replisome complex has a single clamp-loading complex (3 tau and 1 each of delta, delta', psi and chi subunits) which binds 3 Pol III cores (1 core on the leading strand and 2 on the lagging strand) each with a beta sliding clamp dimer. Additional proteins in the replisome are other copies of gamma, psi and chi, Ssb, DNA helicase and RNA primase.

Its subcellular location is the cytoplasm. Confers DNA tethering and processivity to DNA polymerases and other proteins. Acts as a clamp, forming a ring around DNA (a reaction catalyzed by the clamp-loading complex) which diffuses in an ATP-independent manner freely and bidirectionally along dsDNA. Initially characterized for its ability to contact the catalytic subunit of DNA polymerase III (Pol III), a complex, multichain enzyme responsible for most of the replicative synthesis in bacteria; Pol III exhibits 3'-5' exonuclease proofreading activity. The beta chain is required for initiation of replication as well as for processivity of DNA replication. This Vibrio cholerae serotype O1 (strain ATCC 39315 / El Tor Inaba N16961) protein is Beta sliding clamp (dnaN).